A 366-amino-acid polypeptide reads, in one-letter code: Succinyl-diaminopimelate desuccinylase (366 aa).

Histidine 66 contacts Zn(2+). Residue aspartate 68 is part of the active site. Aspartate 97 lines the Zn(2+) pocket. Glutamate 127 functions as the Proton acceptor in the catalytic mechanism. Zn(2+) is bound by residues glutamate 128, glutamate 156, and histidine 341.

This sequence belongs to the peptidase M20A family. DapE subfamily. In terms of assembly, homodimer. Requires Zn(2+) as cofactor. Co(2+) is required as a cofactor.

The enzyme catalyses N-succinyl-(2S,6S)-2,6-diaminopimelate + H2O = (2S,6S)-2,6-diaminopimelate + succinate. The protein operates within amino-acid biosynthesis; L-lysine biosynthesis via DAP pathway; LL-2,6-diaminopimelate from (S)-tetrahydrodipicolinate (succinylase route): step 3/3. In terms of biological role, catalyzes the hydrolysis of N-succinyl-L,L-diaminopimelic acid (SDAP), forming succinate and LL-2,6-diaminopimelate (DAP), an intermediate involved in the bacterial biosynthesis of lysine and meso-diaminopimelic acid, an essential component of bacterial cell walls. This is Succinyl-diaminopimelate desuccinylase from Aliarcobacter butzleri (strain RM4018) (Arcobacter butzleri).